Consider the following 318-residue polypeptide: Ribose-phosphate pyrophosphokinase 1 (318 aa).

96–101 (RQDKKD) serves as a coordination point for ATP. Mg(2+)-binding residues include Asp128, His130, Asp139, and Asp143. His130 contributes to the ATP binding site. Residues 212–227 (KDRVAILVDDMADTCG) form a binding of phosphoribosylpyrophosphate region.

It belongs to the ribose-phosphate pyrophosphokinase family. In terms of assembly, homodimer. The active form is probably a hexamer composed of 3 homodimers. Mg(2+) serves as cofactor.

The catalysed reaction is D-ribose 5-phosphate + ATP = 5-phospho-alpha-D-ribose 1-diphosphate + AMP + H(+). Its pathway is metabolic intermediate biosynthesis; 5-phospho-alpha-D-ribose 1-diphosphate biosynthesis; 5-phospho-alpha-D-ribose 1-diphosphate from D-ribose 5-phosphate (route I): step 1/1. With respect to regulation, activated by magnesium and inorganic phosphate. Functionally, catalyzes the synthesis of phosphoribosylpyrophosphate (PRPP) that is essential for nucleotide synthesis. The sequence is that of Ribose-phosphate pyrophosphokinase 1 (PRPS1) from Macaca fascicularis (Crab-eating macaque).